Here is a 265-residue protein sequence, read N- to C-terminus: Pro-opiomelanocortin (265 aa).

A signal peptide spans 1 to 26; that stretch reads MPRLCSSRSGALLLALLLQASMEVRG. 2 disulfide bridges follow: Cys28/Cys50 and Cys34/Cys46. Thr71 carries O-linked (GalNAc...) threonine glycosylation. Phe87 carries the post-translational modification Phenylalanine amide. The segment at 89-138 is disordered; sequence RRNGSSSSGVGGAAQKREEEVAVGEGPGPRGDDAETGPREDKRSYSMEHF. Asn91 is a glycosylation site (N-linked (GlcNAc...) asparagine). Residues 106-129 constitute a propeptide that is removed on maturation; the sequence is EEEVAVGEGPGPRGDDAETGPRED. Residues 118-138 are compositionally biased toward basic and acidic residues; sequence RGDDAETGPREDKRSYSMEHF. Ser132 is modified (N-acetylserine; in Corticotropin). Val144 is modified (valine amide). Ser162 carries the phosphoserine modification. Pyrrolidone carboxylic acid (Glu); partial is present on Glu173. The residue at position 200 (Tyr200) is a Sulfotyrosine. Positions 209–240 are disordered; that stretch reads EAAEKKDSGPYKMEHFRWGSPPKDKRYGGFMT. Positions 210 to 235 are enriched in basic and acidic residues; it reads AAEKKDSGPYKMEHFRWGSPPKDKRY.

It belongs to the POMC family. In terms of processing, specific enzymatic cleavages at paired basic residues yield the different active peptides. In terms of tissue distribution, ACTH and MSH are produced by the pituitary gland.

It localises to the secreted. Stimulates the adrenal glands to release cortisol. Its function is as follows. Anorexigenic peptide. Increases the pigmentation of skin by increasing melanin production in melanocytes. In terms of biological role, endogenous orexigenic opiate. Functionally, endogenous opiate. The protein is Pro-opiomelanocortin (POMC) of Bos taurus (Bovine).